We begin with the raw amino-acid sequence, 78 residues long: Lantibiotic cinnamycin (78 aa).

The propeptide occupies 1-59; it reads MTASILQQSVVDADFRAALLENPAAFGASAAALPTPVEAQDQASLDFWTKDIAATEAFA. 2 cross-links (beta-methyllanthionine (Cys-Thr)) span residues 60-77 and 64-70; these read CRQS…DGNT and CSFGPFT. The lanthionine (Ser-Cys) cross-link spans 63–73; the sequence is SCSFGPFTFVC. A cross-link (lysinoalanine (Ser-Lys)) is located at residues 65–78; sequence SFGPFTFVCDGNTK. (3R)-3-hydroxyaspartate is present on aspartate 74.

This sequence belongs to the type B lantibiotic family. Maturation of lantibiotics involves the enzymatic conversion of Thr, and Ser into dehydrated AA and the formation of thioether bonds with cysteine or the formation of dialkylamine bonds with lysine. This is followed by membrane translocation and cleavage of the modified precursor.

Can act as inhibitor of the enzyme phospholipase A2, and of the angiotensin-converting enzyme. Shows inhibitory activities against herpes simplex virus and immunopotentiating activities. Its antimicrobial activities are not very pronounced. This is Lantibiotic cinnamycin (cinA) from Streptomyces griseoverticillatus (Streptoverticillium griseoverticillatum).